The following is a 131-amino-acid chain: Thrombocorticin (131 aa).

The cysteines at positions 3 and 111 are disulfide-linked. Residues 28 to 60 (RNESVEVKDSNGNTVSRGSGSSSSGGTFTVINM) form a disordered region. Over residues 37-54 (SNGNTVSRGSGSSSSGGT) the composition is skewed to low complexity. Residues 117–131 (DFNDVFVLITGLVRG) carry the Pseudodomain-swapping motif motif.

Functionally, binds to fucose and mannose in a calcium-dependent manner (in vitro). Acts as an agonist for human thrombopoietin receptor MPL (in vitro). Binding of sugar-moieties may promote the interaction with human MPL on the cell surface (in vitro). Catalyzes MPL dimerization and activation, and modulates internalization of the receptor (in vitro). Exhibits proliferation activity in murine recombinant Ba/F3 cells expressing human MPL (Ba/F3-huMPL) (in vitro). Induces phosphorylation of STAT5 in recombinant Ba/F3-huMPL cells, possibly by stimulating MPL on the cell surface to transduce signals via Jak/STAT signaling pathway (in vitro). Does not aggregate rabbit erythrocytes, indicating absent lectin-like agglutination activity (in vitro). The protein is Thrombocorticin of Corticium sp. (Marine sponge).